The following is a 316-amino-acid chain: Alkaline ceramidase YPC1 (316 aa).

At 1–36 (MGIFRWNYPESSVPGVWGETTSTIDWCEENYVVSPY) the chain is on the lumenal side. A disulfide bridge links C27 with C219. The stretch at 37–57 (IAEWSNTLTNSVFILSAIYTT) is an intramembrane region. The Lumenal portion of the chain corresponds to 58-68 (YSAYKNKLEKR). An intramembrane segment occupies 69–89 (FLLIGFGYGLVGVGSWLFHMT). At 90 to 93 (LKYR) the chain is on the lumenal side. A helical membrane pass occupies residues 94 to 114 (FQLLDELPMIYAMCIPTWSLV). The Cytoplasmic portion of the chain corresponds to 115–135 (CEAKEALLNGDNHKKVPLFEQ). Residues 136-156 (IFIGVIIGLAVTTASILYVIY) form a helical membrane-spanning segment. Topologically, residues 157 to 160 (KNVD) are lumenal. The stretch at 161-181 (IHQILFGVQIVVVAATAGSLT) is an intramembrane region. At 182 to 195 (YRYVHDPLAKRNLK) the chain is on the lumenal side. The stretch at 196–216 (ASMALGAILFLSGYISWLLDI) is an intramembrane region. The Lumenal segment spans residues 217 to 228 (HYCSFWVHVRRS). Residues 229–249 (ILALPLGVLLEPHGWWHILTG) form a helical membrane-spanning segment. Over 250–316 (MGIYFYIVSL…DQSIEVKKEK (67 aa)) the chain is Cytoplasmic.

This sequence belongs to the alkaline ceramidase family.

It localises to the endoplasmic reticulum membrane. The catalysed reaction is N-hexanoyl-sphinganine + H2O = hexanoate + sphinganine. It carries out the reaction sphinganine + hexadecanoate = N-hexadecanoylsphinganine + H2O. The enzyme catalyses N-hexadecanoyl-(4R)-hydroxysphinganine + H2O = (4R)-hydroxysphinganine + hexadecanoate. It catalyses the reaction N-hexadecanoylsphing-4-enine + H2O = sphing-4-enine + hexadecanoate. The catalysed reaction is an N-acyl-(4R)-4-hydroxysphinganine + H2O = (4R)-hydroxysphinganine + a fatty acid. Functionally, alkaline ceramidase that hydrolyzes phytoceramide and also dihydroceramide into phytosphingosine or dihydrosphingosine. Prefers phytoceramide. Also has reverse activity as acyl-CoA-independent ceramide synthase, catalyzing synthesis of phytoceramide and dihydroceramide from palmitic acid and phytosphingosine or dihydrosphingosine. Is not responsible for the breakdown of unsaturated ceramide. Preferentially uses very long chain fatty acids (C-24 and C-26) in vivo compared to C-16 in vitro. The protein is Alkaline ceramidase YPC1 (YPC1) of Saccharomyces cerevisiae (strain ATCC 204508 / S288c) (Baker's yeast).